Consider the following 499-residue polypeptide: Glucose-6-phosphate isomerase (499 aa).

The active-site Proton donor is E352. Active-site residues include H383 and K487.

Belongs to the GPI family.

The protein resides in the cytoplasm. The catalysed reaction is alpha-D-glucose 6-phosphate = beta-D-fructose 6-phosphate. The protein operates within carbohydrate biosynthesis; gluconeogenesis. Its pathway is carbohydrate degradation; glycolysis; D-glyceraldehyde 3-phosphate and glycerone phosphate from D-glucose: step 2/4. In terms of biological role, catalyzes the reversible isomerization of glucose-6-phosphate to fructose-6-phosphate. The chain is Glucose-6-phosphate isomerase from Legionella pneumophila (strain Lens).